The following is a 549-amino-acid chain: Frizzled-7-A (549 aa).

The first 22 residues, 1–22, serve as a signal peptide directing secretion; the sequence is MSSTVSLLFCCLFLQLCPSAQQ. The Extracellular portion of the chain corresponds to 23 to 231; it reads YHGEKGISVP…EEEVRFARLW (209 aa). In terms of domain architecture, FZ spans 32–151; sequence PDHGFCQPIS…HGAGEICVGQ (120 aa). Cystine bridges form between cysteine 37–cysteine 98, cysteine 45–cysteine 91, cysteine 82–cysteine 119, cysteine 108–cysteine 148, and cysteine 112–cysteine 136. Asparagine 51 carries an N-linked (GlcNAc...) asparagine glycan. The N-linked (GlcNAc...) asparagine glycan is linked to asparagine 152. Residues 232–252 traverse the membrane as a helical segment; the sequence is VGIWAILCCISTLFTVLTYLV. The Cytoplasmic segment spans residues 253-263; that stretch reads DMRRFSYPERP. A helical membrane pass occupies residues 264-284; that stretch reads IIFLSGCYFMVAVAYTAGFLL. Topologically, residues 285 to 311 are extracellular; sequence EERAVCVERFSEDSYRTVAQGTKKEGC. A helical transmembrane segment spans residues 312-332; it reads TILFMILYFFGMASSIWWVIL. Residues 333–354 lie on the Cytoplasmic side of the membrane; the sequence is SLTWFLSAGMKWGHEAIEANSQ. Residues 355-375 traverse the membrane as a helical segment; sequence YFHLAAWAVPAVKTITILAMG. Over 376-398 the chain is Extracellular; the sequence is QVDGDVLSGVCYVGINSVDSLRG. Residues 399-419 traverse the membrane as a helical segment; the sequence is FVLAPLFVYLFIGTSFLLAGF. Residues 420-445 are Cytoplasmic-facing; the sequence is VSLFRIRTIMKHDGTKTEKLEKLMVR. Residues 446 to 466 traverse the membrane as a helical segment; the sequence is IGVFSVMYTVPATIVLACYFY. Topologically, residues 467–503 are extracellular; sequence EQAFRDTWEKTWLVQTCKGYAVPCPNYNFAPMSPDFT. The chain crosses the membrane as a helical span at residues 504–524; it reads VFMIKYLMTMIVGITSSFWIW. At 525-549 the chain is on the cytoplasmic side; sequence SGKTLQSWRRFYHRLSNGSKGETAV. Positions 527-532 match the Lys-Thr-X-X-X-Trp motif, mediates interaction with the PDZ domain of Dvl family members motif; that stretch reads KTLQSW. The PDZ-binding motif lies at 547–549; sequence TAV.

Belongs to the G-protein coupled receptor Fz/Smo family. As to quaternary structure, interacts with wnt11 and sdc4. The extracellular domain interacts with the extracellular domain of pcdh8/papc. As to expression, expressed in the animal region of cleavage stage embryos. During gastrulation, broadly expressed on the dorsal side of the embryo in deep mesodermal cells surrounding the blastopore lip and in presumptive anterior neuroectoderm. During neurulation, becomes progressively more restricted to the dorsal epidermis, neural plate, and neural tube. Expressed in the cranial neural crest of neurulae and tailbud embryos as well as the pronephros of tailbud embryos. Localized to the brain of neurulae, tailbud embryos and tadpoles. In tadpoles, strongly expressed in the eye and developing heart.

It is found in the cell membrane. The protein localises to the endosome membrane. In terms of biological role, receptor for Wnt proteins. Acts in both canonical and non-canonical Wnt pathways. Although different papers report differing Wnt preferences, wnt5a, wnt8b and wnt11 have been proposed as synergists. In the canonical Wnt pathway, acts via beta-catenin to promote the expression of the dorsal genes siamois, twin and nodal3 and to establish the dorsal axis of the embryo and induce dorsal mesoderm formation. In a non-canonical Wnt/planar cell polarity (PCP) pathway, acts with sdc4 and dvl2/dsh to regulate convergent extension cell movements during gastrulation. Triggers phosphorylation of dvl2/dsh and its translocation to the plasma membrane. In a third branch of Wnt signaling, acts in a non-canonical pathway via trimeric G proteins, and independently of dvl2/dsh, to recruit protein kinase C (PKC) to the membrane and thus activate PKC. PKC signaling controls cell sorting and tissue separation during gastrulation. The chain is Frizzled-7-A (fzd7-a) from Xenopus laevis (African clawed frog).